The primary structure comprises 462 residues: Runt-related transcription factor 1 (462 aa).

The disordered stretch occupies residues 1 to 27 (MRIPVDTSTSRRFTPPSTTLSPGKMSE). Positions 7–22 (TSTSRRFTPPSTTLSP) are enriched in low complexity. Residues 50 to 178 (NMVEVLSDHP…TVDGPREPRR (129 aa)) form the Runt domain. Residues 80-84 (RCNKT) are interaction with DNA. The chloride site is built by asparagine 112, glutamate 116, arginine 139, and valine 170. Interaction with DNA regions lie at residues 135-143 (RFVGRSGRG) and 168-177 (ITVDGPREPR). Residues 399 to 462 (MMSGGERSPP…RLEEAVWRPY (64 aa)) are disordered. Polar residues-rich tracts occupy residues 415-433 (TNAS…NQSD) and 440-450 (SHSNSPTNMGS). Residues 453–462 (RLEEAVWRPY) are compositionally biased toward basic and acidic residues.

Heterodimer with cbfb. runx1 binds DNA as a monomer and through the Runt domain. DNA-binding is increased by heterodimerization. As to expression, shows a complex and dynamic expression pattern. In stage 14-24 embryos, expressed in a subset of neuroblasts in the lateral stripe of the neural plate. In late neurula stages, expression begins in the olfactory placodes. Also expressed in structures that play a role in blood formation: at stage 14, expressed on the anterior ventral side of the embryo in the anterior endomesoderm. As the embryo elongates, expression shifts gradually to a V-shaped expression pattern in the presumptive ventral blood island.

It is found in the nucleus. Functionally, involved in primitive hematopoiesis in the embryo. This chain is Runt-related transcription factor 1, found in Xenopus laevis (African clawed frog).